The chain runs to 566 residues: ATP-dependent RNA helicase DBP3 (566 aa).

The interval 1–139 (MSAGKKHARD…TTPNGSAQRN (139 aa)) is disordered. The segment covering 39-58 (DKKKKDKKDKKERKEKKEKK) has biased composition (basic residues). The segment covering 81-91 (SEPKPEKEKKE) has biased composition (basic and acidic residues). Residues 92–102 (KNNKKDKKDKK) are compositionally biased toward basic residues. The span at 127–139 (AATTTPNGSAQRN) shows a compositional bias: polar residues. The short motif at 182-209 (IHFSHLPTSTLTSKKPFASFTAPTPIQA) is the Q motif element. The 185-residue stretch at 212–396 (WPFALSGRDV…EGFMIDPVKA (185 aa)) folds into the Helicase ATP-binding domain. 225–232 (AETGSGKT) contacts ATP. A DEAD box motif is present at residues 342–345 (DEAD). Residues 433 to 566 (GKEQRLLELL…TEHDKSHSGS (134 aa)) enclose the Helicase C-terminal domain.

The protein belongs to the DEAD box helicase family. DDX5/DBP2 subfamily.

It localises to the nucleus. It is found in the nucleolus. It carries out the reaction ATP + H2O = ADP + phosphate + H(+). ATP-dependent RNA helicase required for 60S ribosomal subunit synthesis. Involved in efficient pre-rRNA processing, predominantly at site A3, which is necessary for the normal formation of 25S and 5.8S rRNAs. The polypeptide is ATP-dependent RNA helicase DBP3 (DBP3) (Chaetomium globosum (strain ATCC 6205 / CBS 148.51 / DSM 1962 / NBRC 6347 / NRRL 1970) (Soil fungus)).